Here is a 337-residue protein sequence, read N- to C-terminus: Terpene cyclase (337 aa).

A helical transmembrane segment spans residues 5–25 (ASVIFLSLSVLAAVGVWGPFV). The N-linked (GlcNAc...) asparagine glycan is linked to N65. The next 7 membrane-spanning stretches (helical) occupy residues 72-92 (IAYC…VILC), 111-131 (GLLS…MSFI), 149-169 (ALIL…LNVL), 177-197 (IWGI…ARII), 222-242 (VAGG…LGIF), 267-287 (LQVD…HELI), and 298-318 (LGGL…AAAW).

Belongs to the membrane-bound ascI terpene cyclase family.

The protein resides in the membrane. Its pathway is antifungal biosynthesis. Cyclase; part of the gene cluster that mediates the biosynthesis of the tetrahydropyranyl antifungal agent lanomycin that acts as an inhibitor of CYP51 and blocks the ergosterol biosynthesis. The biosynthesis probably begins with the formation of an hexaketide, followed by methionine mediated alkylation of C-2 and C-6, and methylation of the reduced C-3 oxygen, pyran forming reductive ring closure, oxygenation of C-4, beta-keto reduction, enoyl reduction and dehydration of the remaining oxygens, and finally, acylation with glycine to complete the biosynthesis. In Pyrenophora dematioidea (Helminthosporium dematioideum), this protein is Terpene cyclase.